A 150-amino-acid polypeptide reads, in one-letter code: Large ribosomal subunit protein bL9 (150 aa).

Belongs to the bacterial ribosomal protein bL9 family.

In terms of biological role, binds to the 23S rRNA. This Leptothrix cholodnii (strain ATCC 51168 / LMG 8142 / SP-6) (Leptothrix discophora (strain SP-6)) protein is Large ribosomal subunit protein bL9.